We begin with the raw amino-acid sequence, 226 residues long: 2-C-methyl-D-erythritol 4-phosphate cytidylyltransferase (226 aa).

It belongs to the IspD/TarI cytidylyltransferase family. IspD subfamily.

The enzyme catalyses 2-C-methyl-D-erythritol 4-phosphate + CTP + H(+) = 4-CDP-2-C-methyl-D-erythritol + diphosphate. It participates in isoprenoid biosynthesis; isopentenyl diphosphate biosynthesis via DXP pathway; isopentenyl diphosphate from 1-deoxy-D-xylulose 5-phosphate: step 2/6. Functionally, catalyzes the formation of 4-diphosphocytidyl-2-C-methyl-D-erythritol from CTP and 2-C-methyl-D-erythritol 4-phosphate (MEP). The sequence is that of 2-C-methyl-D-erythritol 4-phosphate cytidylyltransferase from Haemophilus ducreyi (strain 35000HP / ATCC 700724).